The sequence spans 407 residues: Argininosuccinate synthase (407 aa).

ATP contacts are provided by residues 13-21 (AYSGGLDTS) and A40. 2 residues coordinate L-citrulline: Y91 and S96. G121 serves as a coordination point for ATP. L-aspartate-binding residues include T123, N127, and D128. N127 serves as a coordination point for L-citrulline. R131, S182, S191, E267, and Y279 together coordinate L-citrulline.

The protein belongs to the argininosuccinate synthase family. Type 1 subfamily. As to quaternary structure, homotetramer.

It localises to the cytoplasm. It catalyses the reaction L-citrulline + L-aspartate + ATP = 2-(N(omega)-L-arginino)succinate + AMP + diphosphate + H(+). It participates in amino-acid biosynthesis; L-arginine biosynthesis; L-arginine from L-ornithine and carbamoyl phosphate: step 2/3. This is Argininosuccinate synthase from Rhizobium etli (strain ATCC 51251 / DSM 11541 / JCM 21823 / NBRC 15573 / CFN 42).